A 614-amino-acid chain; its full sequence is Protein YehQ (614 aa).

2 consecutive SWIM-type zinc fingers follow at residues 55 to 89 (VRTQ…LSYQ) and 151 to 185 (SDVR…QAFV).

The polypeptide is Protein YehQ (yehQ) (Escherichia coli (strain K12)).